The sequence spans 240 residues: MAISPSRVFAALLPTAGDIYRDENEPGMGGHTVTVQRTQNSAREVQVTGSAEVSCPADRATVSVSFKNSKESVNDVTNSISRRVEYILQTLRQHHVKGEELTVTRHIYRADDLYHMEALVMVVFSDFGQMERVCIVLLEKLDKSVCVSTPHFYHSEECLGLLRRSVCVAAVENARLKASEMSSMLGQTLGHPLLVREEEATERDGGRQGGEGVHRPSISATSRVFVTFNLRHKDRTRKKI.

Belongs to the IRAK1BP1 family.

It is found in the cytoplasm. Its subcellular location is the nucleus. Functionally, may be part of a signaling pathway that leads to NF-kappa-B activation. In Oncorhynchus mykiss (Rainbow trout), this protein is Interleukin-1 receptor-associated kinase 1-binding protein 1 homolog (irak1bp1).